The following is a 448-amino-acid chain: Lipoamide acyltransferase component of branched-chain alpha-keto acid dehydrogenase complex, mitochondrial (448 aa).

A Lipoyl-binding domain is found at 30–105 (VVQFKLSDIG…RVGQALIDVE (76 aa)). At Lys-71 the chain carries N6-lipoyllysine. Disordered regions lie at residues 108-146 (GNVE…GKVL) and 191-211 (TSGS…SKSY). Positions 121–136 (ASSSPEAPKSSAPKAP) are enriched in low complexity. Positions 146–183 (LATPAVRRIAIENKIKLAEVRGTGKDGRVLKEDVLKFL) constitute a Peripheral subunit-binding (PSBD) domain. The segment covering 191–210 (TSGSTNIRTTHQAPQPSSKS) has biased composition (polar residues). CoA-binding residues include Arg-257, Ser-272, Asp-315, Ser-365, Asn-366, Gly-390, and Ile-392. Active-site residues include His-418 and Asp-422.

It belongs to the 2-oxoacid dehydrogenase family. Requires (R)-lipoate as cofactor. As to expression, ubiquitously expressed.

The protein resides in the mitochondrion matrix. Its subcellular location is the cytoplasm. It localises to the cytosol. It is found in the cell projection. The protein localises to the dendrite. The protein resides in the cilium. The catalysed reaction is N(6)-[(R)-dihydrolipoyl]-L-lysyl-[protein] + 2-methylpropanoyl-CoA = N(6)-[(R)-S(8)-2-methylpropanoyldihydrolipoyl]-L-lysyl-[protein] + CoA. Its function is as follows. The branched-chain alpha-keto dehydrogenase complex catalyzes the overall conversion of alpha-keto acids to acyl-CoA and CO(2). It contains multiple copies of three enzymatic components: branched-chain alpha-keto acid decarboxylase (E1), lipoamide acyltransferase (E2) and lipoamide dehydrogenase (E3). Within this complex, the catalytic function of this enzyme is to accept, and to transfer to coenzyme A, acyl groups that are generated by the branched-chain alpha-keto acid decarboxylase component. Required for the catabolism of branched-chain amino acids and the subsequent synthesis of monomethyl branched-chain fatty acids, which are important for regulating postembryonic growth. This chain is Lipoamide acyltransferase component of branched-chain alpha-keto acid dehydrogenase complex, mitochondrial, found in Caenorhabditis elegans.